The primary structure comprises 251 residues: Intermembrane phospholipid transport system lipoprotein MlaA (251 aa).

A signal peptide spans 1–17; the sequence is MKLRLSALALGTTLLVG. Cysteine 18 carries N-palmitoyl cysteine lipidation. Cysteine 18 is lipidated: S-diacylglycerol cysteine. The segment at 228–251 is disordered; sequence GELKPQENPNAQAIQDDLKDIDSE.

Belongs to the MlaA family.

It localises to the cell outer membrane. Involved in a phospholipid transport pathway that maintains lipid asymmetry in the outer membrane by retrograde trafficking of phospholipids from the outer membrane to the inner membrane. Required for intercellular spreading of S.flexneri. This Shigella flexneri protein is Intermembrane phospholipid transport system lipoprotein MlaA.